We begin with the raw amino-acid sequence, 461 residues long: MPMLKIYNSITRQKQEFKPITPGKVGMYVCGVTVYDLCHIGHGRTFVSFDMIVRYLRYAGYEVNFQRNITDIDDKIIKRANENQEDCNTLTDRLIGEMHKDFDALNMIRPDFEPRATLHIAEIIDMVERLLARGHAYVAADGDVLFSVASFPEYGRLSGQNLEQLQAGARVEVDDNKQNPMDFVLWKMSKPGEPTWESPWGPGRPGWHIECSAMNSKHLGLHFDIHGGGSDLQFPHHENEIAQSCCAHDTPYVNYWMHTGMVMVDREKMSKSLGNFFTIRDVLGHYDAETVRYFLLSGHYRSQINYSEENLKQARAALERLYTAIKDVDLTVTAAPAEEFVAKFKAAMDDDFNTPEAYSVLFDMVREINRLKTTDMAQASAMAVAMKQLADVLGLLHQAPDAFFKGEGSDDEVAEIEALIVERNRARAEKDWPAADVARNRLNELGVVLEDGPSGTTWRKK.

C30 contacts Zn(2+). Residues 32–42 (VTVYDLCHIGH) carry the 'HIGH' region motif. Positions 211, 236, and 240 each coordinate Zn(2+). A 'KMSKS' region motif is present at residues 268-272 (KMSKS). K271 provides a ligand contact to ATP.

It belongs to the class-I aminoacyl-tRNA synthetase family. As to quaternary structure, monomer. Zn(2+) is required as a cofactor.

It is found in the cytoplasm. The enzyme catalyses tRNA(Cys) + L-cysteine + ATP = L-cysteinyl-tRNA(Cys) + AMP + diphosphate. The polypeptide is Cysteine--tRNA ligase (Shewanella sp. (strain ANA-3)).